The following is a 149-amino-acid chain: Calmodulin-1 (149 aa).

EF-hand domains follow at residues 8 to 43, 44 to 79, 81 to 116, and 117 to 149; these read EQIS…LGQN, PTEA…KMKD, DSEE…LGEK, and LTDE…MMAK. Ca(2+)-binding residues include Asp21, Asp23, Asp25, Cys27, Glu32, Asp57, Asp59, Asn61, Thr63, Glu68, Asp94, Asp96, Asn98, Glu105, Asp130, Asp132, Asp134, Gln136, and Glu141.

The protein belongs to the calmodulin family. Interacts with ZAR1 (via CaMBD domain). Binds to IQD1. Binds to MEE62 in a calcium-dependent manner.

Its subcellular location is the cytoplasm. It is found in the cell membrane. In terms of biological role, calmodulin mediates the control of a large number of enzymes, ion channels and other proteins by Ca(2+). Among the enzymes to be stimulated by the calmodulin-Ca(2+) complex are a number of protein kinases and phosphatases. In Arabidopsis thaliana (Mouse-ear cress), this protein is Calmodulin-1 (CAM1).